We begin with the raw amino-acid sequence, 664 residues long: PAN2-PAN3 deadenylation complex subunit PAN3 (664 aa).

2 disordered regions span residues 1 to 27 and 54 to 134; these read MATT…GREN and DPHK…PGTM. The segment at 27–56 adopts a C3H1-type zinc-finger fold; that stretch reads NAKDTLCRNVTIYGRCRYEDKGCAFNHDPH. Over residues 74–96 the composition is skewed to polar residues; that stretch reads DSPSFTPSILSSNGSSPTSQSAT. Residues 115-131 show a composition bias toward low complexity; sequence PRSISSRSNSSTPTTRP. The interval 265-525 is pseudokinase domain; the sequence is QTLPNTQLPA…NIDIFITGIS (261 aa). ATP is bound by residues Arg317, 366–373, and 425–426; these read DYHPLSKT and SK. A coiled-coil region spans residues 526–564; it reads STLMSTFDSALHLDDQLTSDLSRELENGRLVRLMTKLNF. The segment at 565-664 is knob domain; sequence VNERPEYEHD…LKPSASRRLH (100 aa).

The protein belongs to the protein kinase superfamily. PAN3 family. In terms of assembly, homodimer. Forms a heterotrimer with a catalytic subunit pan2 to form the poly(A)-nuclease (PAN) deadenylation complex. Interacts (via PAM-2 motif) with poly(A)-binding protein pab1 (via PABC domain), conferring substrate specificity of the enzyme complex.

The protein localises to the cytoplasm. Regulatory subunit of the poly(A)-nuclease (PAN) deadenylation complex, one of two cytoplasmic mRNA deadenylases involved in mRNA turnover. PAN specifically shortens poly(A) tails of RNA and the activity is stimulated by poly(A)-binding protein pab1. PAN deadenylation is followed by rapid degradation of the shortened mRNA tails by the CCR4-NOT complex. Deadenylated mRNAs are then degraded by two alternative mechanisms, namely exosome-mediated 3'-5' exonucleolytic degradation, or deadenylation-dependent mRNA decaping and subsequent 5'-3' exonucleolytic degradation by xrn1. May also be involved in post-transcriptional maturation of mRNA poly(A) tails. pan3 acts as a positive regulator for PAN activity, recruiting the catalytic subunit pan2 to mRNA via its interaction with RNA and with pab1. In Aspergillus niger (strain ATCC MYA-4892 / CBS 513.88 / FGSC A1513), this protein is PAN2-PAN3 deadenylation complex subunit PAN3.